Here is a 3948-residue protein sequence, read N- to C-terminus: Hybrid PKS-NRPS synthetase fsa1 (3948 aa).

The Ketosynthase family 3 (KS3) domain occupies 4 to 438 (SEPIAVIGSA…GTNAHAIIEA (435 aa)). Active-site for beta-ketoacyl synthase activity residues include Cys177, His316, and His358. The interval 543–846 (IFTGQGTQWP…LDTIEAISEG (304 aa)) is malonyl-CoA:ACP transacylase (MAT) domain. An N-terminal hotdog fold region spans residues 931-1066 (HPLLGRRCHD…AQIKASLGTP (136 aa)). Residues 931–1233 (HPLLGRRCHD…MELVPFSPAT (303 aa)) are dehydratase (DH) domain. The region spanning 931–1235 (HPLLGRRCHD…LVPFSPATPA (305 aa)) is the PKS/mFAS DH domain. The active-site Proton acceptor; for dehydratase activity is the His964. The segment at 1081–1235 (LRPVSVDRFY…LVPFSPATPA (155 aa)) is C-terminal hotdog fold. Asp1141 acts as the Proton donor; for dehydratase activity in catalysis. The interval 1381 to 1578 (YEQGFGLNLV…TTPPVHKILP (198 aa)) is methyltransferase (MT) domain. Residues 2105–2277 (TFLLIGLTGE…VAASSIDISS (173 aa)) are ketoreductase (KR) domain. Residues 2389-2464 (AIIKESFIVR…DLVDESLDLL (76 aa)) form the Carrier 1 domain. Ser2424 is modified (O-(pantetheine 4'-phosphoryl)serine). Residues 2475 to 2555 (EAGNAHPAKP…TDNLTPPRTF (81 aa)) form a disordered region. Composition is skewed to polar residues over residues 2487-2505 (VIPQ…QGTS) and 2513-2528 (GSDS…LTSW). The span at 2529–2541 (DRQDLSPPDKSDD) shows a compositional bias: basic and acidic residues. The span at 2542–2551 (APNSTDNLTP) shows a compositional bias: polar residues. Residues 2547 to 2976 (DNLTPPRTFP…TQVLLRSYLS (430 aa)) are condensation (C) domain. The segment at 3000 to 3402 (LKVAVDAGKA…PDTFFGTSGT (403 aa)) is adenylation (A) (KR) domain. A Carrier 2 domain is found at 3540–3617 (KSLTASEKRL…AMASVLEDCG (78 aa)). Ser3577 bears the O-(pantetheine 4'-phosphoryl)serine mark. The reductase (RED) domain stretch occupies residues 3653-3870 (LTGSSGYLGR…MPVNEIVEAI (218 aa)).

It in the C-terminal section; belongs to the NRP synthetase family.

It carries out the reaction L-serine + 7 malonyl-CoA + acetyl-CoA + 2 S-adenosyl-L-methionine + ATP + 8 NADPH + 11 H(+) = (5S)-3-[(2E,6R,8E,10E,12E)-2,6-dimethyltetradeca-2,8,10,12-tetraenoyl]-5-(hydroxymethyl)pyrrolidine-2,4-dione + AMP + 2 S-adenosyl-L-homocysteine + 7 CO2 + diphosphate + 8 NADP(+) + 8 CoA + 6 H2O. Its pathway is mycotoxin biosynthesis. Its function is as follows. Hybrid PKS-NRPS synthetase; part of the gene cluster that mediates the biosynthesis of HIV-1 integrase inhibitor equisetin and of fusarisetin A, both trans-fused decalin-containing tetramic acids showing also antimicrobial activity. The PKS module of fsa1 together with the enoylreductase fsa3 catalyze the formation of the polyketide unit which is then conjugated to L-serine by the condensation domain of the fsa1 NRPS module. Activity of the Dieckmann cyclase domain (RED) results in release of the Dieckmann product intermediate. Diels-Alderase fsa2 is involved in endo-selective Diels-Alder cycloaddition to form the decalin ring, leading to the production of N-desmethylequisetin also called trichosetin. Subsequent N-methylation is carried out by fsa4 to give equisetin. The enzymatic gene responsible for the conversion of equisetin to fusarisetin A has not been identified yet and is probably located outside of the fsa cluster. This Fusarium sp. (strain FN080326) protein is Hybrid PKS-NRPS synthetase fsa1.